Here is a 132-residue protein sequence, read N- to C-terminus: Small ribosomal subunit protein uS8 (132 aa).

This sequence belongs to the universal ribosomal protein uS8 family. Part of the 30S ribosomal subunit. Contacts proteins S5 and S12.

One of the primary rRNA binding proteins, it binds directly to 16S rRNA central domain where it helps coordinate assembly of the platform of the 30S subunit. The sequence is that of Small ribosomal subunit protein uS8 from Borrelia hermsii (strain HS1 / DAH).